A 162-amino-acid polypeptide reads, in one-letter code: B-box zinc finger protein 23 (162 aa).

Zn(2+)-binding residues include C5, C8, C28, H33, C63, C66, C86, and H91. Residues 5–47 (CEVCEKAEAEVLCCSDEAVLCKPCDIKVHEANKLFQRHHRVAL) form a B box-type 1; atypical zinc finger. Residues 63–101 (CDICQERKGYFFCLEDRAMLCNDCDEAIHTCNSHQRFLL) form a B box-type 2; atypical zinc finger. The disordered stretch occupies residues 137 to 162 (QYSSEETEAGNSGEIVHKNPSVILSP).

The protein localises to the nucleus. Its function is as follows. Probable transcription factor that may be involved in seedling photomorphogenesis. In Arabidopsis thaliana (Mouse-ear cress), this protein is B-box zinc finger protein 23.